The chain runs to 152 residues: Xanthine-guanine phosphoribosyltransferase (152 aa).

5-phospho-alpha-D-ribose 1-diphosphate-binding positions include R37–G38, R69, and D88–T96. R69 contributes to the GMP binding site. D89 contacts Mg(2+). The guanine site is built by D92 and I135. Xanthine contacts are provided by D92 and I135. GMP is bound by residues D92 to T96 and W134 to I135.

The protein belongs to the purine/pyrimidine phosphoribosyltransferase family. XGPT subfamily. Homotetramer. Mg(2+) serves as cofactor.

The protein localises to the cell inner membrane. The catalysed reaction is GMP + diphosphate = guanine + 5-phospho-alpha-D-ribose 1-diphosphate. It carries out the reaction XMP + diphosphate = xanthine + 5-phospho-alpha-D-ribose 1-diphosphate. It catalyses the reaction IMP + diphosphate = hypoxanthine + 5-phospho-alpha-D-ribose 1-diphosphate. It functions in the pathway purine metabolism; GMP biosynthesis via salvage pathway; GMP from guanine: step 1/1. The protein operates within purine metabolism; XMP biosynthesis via salvage pathway; XMP from xanthine: step 1/1. Its function is as follows. Purine salvage pathway enzyme that catalyzes the transfer of the ribosyl-5-phosphate group from 5-phospho-alpha-D-ribose 1-diphosphate (PRPP) to the N9 position of the 6-oxopurines guanine and xanthine to form the corresponding ribonucleotides GMP (guanosine 5'-monophosphate) and XMP (xanthosine 5'-monophosphate), with the release of PPi. To a lesser extent, also acts on hypoxanthine. This is Xanthine-guanine phosphoribosyltransferase from Escherichia coli O127:H6 (strain E2348/69 / EPEC).